A 241-amino-acid polypeptide reads, in one-letter code: Chloride intracellular channel protein 1 (241 aa).

An N-acetylalanine modification is found at alanine 2. The segment at 2 to 90 (AEEQPQVELF…EEFLEAVLCP (89 aa)) is required for insertion into the membrane. Lysine 13 carries the post-translational modification N6-acetyllysine. The G-site signature appears at 24–27 (CPFS). The cysteines at positions 24 and 59 are disulfide-linked. The chain crosses the membrane as a helical span at residues 26 to 46 (FSQRLFMVLWLKGVTFNVTTV). A GST C-terminal domain is found at 93 to 233 (YPKLAALNPE…PDDEEIELAY (141 aa)). At lysine 119 the chain carries N6-acetyllysine. Phosphoserine is present on serine 121. Position 131 is an N6-acetyllysine (lysine 131). Serine 156 carries the phosphoserine modification. Tyrosine 233 carries the post-translational modification Phosphotyrosine.

The protein belongs to the chloride channel CLIC family. In terms of assembly, monomer. Homodimer (in vitro). Interacts with TRAPPC2. Dimerization requires a conformation change that leads to the exposure of a large hydrophobic surface. In vivo, this may lead to membrane insertion.

It localises to the nucleus. It is found in the nucleus membrane. Its subcellular location is the cytoplasm. The protein resides in the cell membrane. The protein localises to the endoplasmic reticulum. The enzyme catalyses L-dehydroascorbate + 2 glutathione = glutathione disulfide + L-ascorbate. It carries out the reaction chloride(in) = chloride(out). The catalysed reaction is iodide(out) = iodide(in). It catalyses the reaction thiocyanate(in) = thiocyanate(out). The enzyme catalyses nitrate(in) = nitrate(out). It carries out the reaction bromide(in) = bromide(out). The catalysed reaction is fluoride(in) = fluoride(out). Functionally, in the soluble state, catalyzes glutaredoxin-like thiol disulfide exchange reactions with reduced glutathione as electron donor. Reduces selenite and dehydroascorbate and may act as an antioxidant during oxidative stress response. Can insert into membranes and form voltage-dependent multi-ion conductive channels. Membrane insertion seems to be redox-regulated and may occur only under oxidizing conditions. Involved in regulation of the cell cycle. The protein is Chloride intracellular channel protein 1 (CLIC1) of Bos taurus (Bovine).